Consider the following 694-residue polypeptide: MARTTPLERYRNIGIMAHIDAGKTTTTERILYYTGKSYKIGEVHEGTATMDWMEQEQERGITITSAATTAFWRDHRVNIIDTPGHVDFTIEVERSLRVLDGAVTVFDSVAGVEPQSETVWRQADKYGVPRICFVNKMDRIGANFYRCVDMIVDRLGARPLVMHLPIGEESGYIGLVDLLRNVAVIWKDESLGAEFEDQPIPADLVEKAAQYRAQLIETAVEMDDEAMEQYLGGEEPSFEVLQACIRKGTISRTFVPVLCGSAFKNKGVQPLLDAVIDYLPAPVDIPAIKGVKYGTEDEIAKHSTDDEPFAGLAFKIMNDPFVGSLTFVRVYSGVVESGSYIQNTVKEKRERVGRMLLMHANSREEIKEARAGDIVAFAGLKDTTTGDTLCDPTPSSLVVLERMEFPEPVIEVAVEPKSKADQEKMGIALARLAAEDPSFRVTSDVESGQTVIKGMGELHLEILVDRMKREFKVEANVGAPQVAYRETISKAYEVDYTHKKQTGGSGQFARVKIRFEPGEKGAGYVFENKVIGGSVPKEYVPGVDKGIRSAMDNGVIAGFPMIDFKATLTDGAYHDVDSSVLAFEIASRAAFREGIAKAGPKLLEPMMKVEVVTPEDYLGDVIGDLNSRRGQVNDMDQRGNARVITAMVPLANMFGYVNTLRSMSQGRAQYSMTFDHYSEVPQNVSDEIRAKLAG.

One can recognise a tr-type G domain in the interval 8–283 (ERYRNIGIMA…AVIDYLPAPV (276 aa)). GTP-binding positions include 17 to 24 (AHIDAGKT), 81 to 85 (DTPGH), and 135 to 138 (NKMD).

Belongs to the TRAFAC class translation factor GTPase superfamily. Classic translation factor GTPase family. EF-G/EF-2 subfamily.

The protein resides in the cytoplasm. Functionally, catalyzes the GTP-dependent ribosomal translocation step during translation elongation. During this step, the ribosome changes from the pre-translocational (PRE) to the post-translocational (POST) state as the newly formed A-site-bound peptidyl-tRNA and P-site-bound deacylated tRNA move to the P and E sites, respectively. Catalyzes the coordinated movement of the two tRNA molecules, the mRNA and conformational changes in the ribosome. The protein is Elongation factor G of Paramagnetospirillum magneticum (strain ATCC 700264 / AMB-1) (Magnetospirillum magneticum).